The sequence spans 697 residues: MDDLLDFNFYDKSTPSNQNNYSNNNSRTPSYSLPAPVAQKKNAQIPLKASKPEDPFANLFQKKTDNKISLKELERQKVGTPDSNSTPKSSNYDPFENLEILHQLSNTPRDKDAVIHDKIEENKRPISQPQVSASEKVTLKDLSLEPHQPVSLPAFENIGSETSIPFENHNEITNMNTAKDKLSSNEMYEKLRDLGFSDDQSRLALENSGSLEDAIEYILEKDNAKGQYREGEAYEAFSDSSAKTQFSDFQALSNQLKSQLFEKANDLWNIGRKKLRDAVEERRAVKDPSKPRWMDASHDFGREATPEILPKTPIPKRKPHKVPMNEKVSEDRITTNQSRSGNDESSLVDFLTSKSDNSSFNFPSDTYEGTENILETAYESTTARQVNNNKPGKSTVKKREEETLNNMVSALVEEQQSTGNELFRKGDFSQAIEEFTNSLSQLPAKHTKRVPLLSNRSLCYQKVGDLKTCLQDVDELVDIIGEEKGHGESIRDKSMNDYYVKNMVRKAQVLEQLEKYQESLNIWKDLIADGQISKLYIDGKHRCEAAISSHSSESHSKRTTQQPKSTPNHTNIKVKSERLQHVRMAQQKAEQLDEERSRLREPVQQIVNKWKEGKESNLRALLASLDTILWPECRWQKVSLSELVLPKKVKIAYMKAVSRVHPDKLPQQTSVEHQLIAESAFSILNHAWELFKQQNDL.

Residues 1-94 (MDDLLDFNFY…STPKSSNYDP (94 aa)) form a disordered region. Over residues 13–32 (STPSNQNNYSNNNSRTPSYS) the composition is skewed to low complexity. A compositionally biased stretch (basic and acidic residues) spans 62–77 (KKTDNKISLKELERQK). The span at 81-92 (PDSNSTPKSSNY) shows a compositional bias: polar residues. A UBA domain is found at 181-221 (KLSSNEMYEKLRDLGFSDDQSRLALENSGSLEDAIEYILEK). The interval 306 to 346 (PEILPKTPIPKRKPHKVPMNEKVSEDRITTNQSRSGNDESS) is disordered. A compositionally biased stretch (basic and acidic residues) spans 323-333 (PMNEKVSEDRI). Over residues 334–345 (TTNQSRSGNDES) the composition is skewed to polar residues. A TPR repeat occupies 412–445 (VEEQQSTGNELFRKGDFSQAIEEFTNSLSQLPAK). The tract at residues 547-573 (ISSHSSESHSKRTTQQPKSTPNHTNIK) is disordered. Residues 559–573 (TTQQPKSTPNHTNIK) show a composition bias toward polar residues. Residues 633 to 696 (CRWQKVSLSE…AWELFKQQND (64 aa)) enclose the J domain.

This Schizosaccharomyces pombe (strain 972 / ATCC 24843) (Fission yeast) protein is UBA domain-containing protein 7 (ucp7).